A 618-amino-acid chain; its full sequence is COMPASS component cclA (618 aa).

Residues 1-91 (MSSIQPVGSS…KKAAVAPNSA (91 aa)) are disordered. Low complexity-rich tracts occupy residues 8-19 (GSSGPSSNINSP) and 37-49 (NARSSPAPPSNAS). Over residues 57-69 (SKRNKRDSRKKRE) the composition is skewed to basic residues. Residues 157 to 368 (IADPGFPHIK…QSNVFSTKHL (212 aa)) form the B30.2/SPRY domain. Residues 588 to 618 (TLSVGHEGSPNPATPSAPLENTVPTEDVEMS) form a disordered region.

It belongs to the cclA family. Component of the COMPASS complex.

It localises to the nucleus. It is found in the chromosome. Its subcellular location is the telomere. Functionally, component of the COMPASS (Set1C) complex that specifically mono-, di- and trimethylates histone H3 to form H3K4me1/2/3, which subsequently plays a role in telomere length maintenance and transcription elongation regulation. Controls the production of several secondary metabolites, including gliotoxin, but does not contribute to pathogenicity. The protein is COMPASS component cclA of Aspergillus fumigatus (strain ATCC MYA-4609 / CBS 101355 / FGSC A1100 / Af293) (Neosartorya fumigata).